The sequence spans 309 residues: tRNA pseudouridine synthase B (309 aa).

The active-site Nucleophile is the Asp-39.

Belongs to the pseudouridine synthase TruB family. Type 1 subfamily.

It catalyses the reaction uridine(55) in tRNA = pseudouridine(55) in tRNA. In terms of biological role, responsible for synthesis of pseudouridine from uracil-55 in the psi GC loop of transfer RNAs. The sequence is that of tRNA pseudouridine synthase B from Bacillus velezensis (strain DSM 23117 / BGSC 10A6 / LMG 26770 / FZB42) (Bacillus amyloliquefaciens subsp. plantarum).